The primary structure comprises 255 residues: Ribosomal RNA small subunit methyltransferase A (255 aa).

Residues N12, L14, G39, E60, D84, and N102 each coordinate S-adenosyl-L-methionine.

Belongs to the class I-like SAM-binding methyltransferase superfamily. rRNA adenine N(6)-methyltransferase family. RsmA subfamily.

It localises to the cytoplasm. The catalysed reaction is adenosine(1518)/adenosine(1519) in 16S rRNA + 4 S-adenosyl-L-methionine = N(6)-dimethyladenosine(1518)/N(6)-dimethyladenosine(1519) in 16S rRNA + 4 S-adenosyl-L-homocysteine + 4 H(+). Specifically dimethylates two adjacent adenosines (A1518 and A1519) in the loop of a conserved hairpin near the 3'-end of 16S rRNA in the 30S particle. May play a critical role in biogenesis of 30S subunits. The protein is Ribosomal RNA small subunit methyltransferase A of Methylobacillus flagellatus (strain ATCC 51484 / DSM 6875 / VKM B-1610 / KT).